The chain runs to 158 residues: MFRIGQGFDVHAFEEGRPLIIGGITIPHEKGLVGHSDADVLLHTVTDAALGAIGEGDIGRHFPDTDPAFKDADSAKLLEYIWKIVEDKGYILGNVDCTIMAQRPKMAPYIEQMQNRIAELLHAEPSQVNVKATTTERLGFTGREEGIAAMATILLMKK.

Residues aspartate 9 and histidine 11 each contribute to the a divalent metal cation site. 4-CDP-2-C-methyl-D-erythritol 2-phosphate is bound by residues 9–11 (DVH) and 35–36 (HS). Histidine 43 lines the a divalent metal cation pocket. 4-CDP-2-C-methyl-D-erythritol 2-phosphate is bound by residues 57–59 (DIG), 62–66 (FPDTD), 101–107 (AQRPKMA), 133–136 (TTTE), phenylalanine 140, and arginine 143.

This sequence belongs to the IspF family. Homotrimer. The cofactor is a divalent metal cation.

The catalysed reaction is 4-CDP-2-C-methyl-D-erythritol 2-phosphate = 2-C-methyl-D-erythritol 2,4-cyclic diphosphate + CMP. Its pathway is isoprenoid biosynthesis; isopentenyl diphosphate biosynthesis via DXP pathway; isopentenyl diphosphate from 1-deoxy-D-xylulose 5-phosphate: step 4/6. Involved in the biosynthesis of isopentenyl diphosphate (IPP) and dimethylallyl diphosphate (DMAPP), two major building blocks of isoprenoid compounds. Catalyzes the conversion of 4-diphosphocytidyl-2-C-methyl-D-erythritol 2-phosphate (CDP-ME2P) to 2-C-methyl-D-erythritol 2,4-cyclodiphosphate (ME-CPP) with a corresponding release of cytidine 5-monophosphate (CMP). The sequence is that of 2-C-methyl-D-erythritol 2,4-cyclodiphosphate synthase from Lysinibacillus sphaericus (strain C3-41).